A 155-amino-acid chain; its full sequence is Transcriptional repressor NrdR (155 aa).

A zinc finger spans residues 3-34 (CPFCHAEETKVVDSRLVADGAQVRRRRECLEC). The 91-residue stretch at 49–139 (PLIIKRDGRR…VYKRFKDVSD (91 aa)) folds into the ATP-cone domain.

The protein belongs to the NrdR family. It depends on Zn(2+) as a cofactor.

Negatively regulates transcription of bacterial ribonucleotide reductase nrd genes and operons by binding to NrdR-boxes. This chain is Transcriptional repressor NrdR, found in Legionella pneumophila (strain Paris).